A 449-amino-acid polypeptide reads, in one-letter code: Heterogeneous nuclear ribonucleoprotein H2 (449 aa).

Met1 bears the N-acetylmethionine mark. N-acetylmethionine; in Heterogeneous nuclear ribonucleoprotein H2, N-terminally processed is present on Met2. The region spanning Phe11–Ser90 is the RRM 1 domain. Ser23 bears the Phosphoserine mark. Lys35 participates in a covalent cross-link: Glycyl lysine isopeptide (Lys-Gly) (interchain with G-Cter in SUMO2). A phosphoserine mark is found at Ser54 and Ser63. Residue Lys87 forms a Glycyl lysine isopeptide (Lys-Gly) (interchain with G-Cter in SUMO2) linkage. The residue at position 90 (Ser90) is a Phosphoserine. A Glycyl lysine isopeptide (Lys-Gly) (interchain with G-Cter in SUMO2) cross-link involves residue Lys98. The 78-residue stretch at Gly111 to Arg188 folds into the RRM 2 domain. Arg233 carries the post-translational modification Dimethylated arginine; alternate. Residue Arg233 is modified to Omega-N-methylarginine; alternate. A 1-1 repeat occupies Gly234–Tyr249. The interval Gly234–Tyr433 is 2 X 16 AA Gly-rich approximate repeats. Residue Tyr246 is modified to Phosphotyrosine. Residues His289–Thr364 form the RRM 3 domain. The residue at position 310 (Ser310) is a Phosphoserine. 3 tandem repeats follow at residues His354–Tyr372, His374–Tyr392, and Gly418–Tyr433. A 2 X 19 AA perfect repeats region spans residues His354–Tyr392.

Component of a ribonucleoprotein complex containing mRNAs and RNA-binding proteins including DDX5, HNRNPH2 and SRSF1 as well as splicing regulator ARVCF. Interacts with TXNL4/DIM1.

It is found in the nucleus. The protein resides in the nucleoplasm. In terms of biological role, this protein is a component of the heterogeneous nuclear ribonucleoprotein (hnRNP) complexes which provide the substrate for the processing events that pre-mRNAs undergo before becoming functional, translatable mRNAs in the cytoplasm. Binds poly(RG). This Mus musculus (Mouse) protein is Heterogeneous nuclear ribonucleoprotein H2 (Hnrnph2).